Here is a 194-residue protein sequence, read N- to C-terminus: Endoribonuclease ToxN (194 aa).

Residues 114–182 adopt a coiled-coil conformation; that stretch reads MLKQYLFLKE…DQAKERDKAR (69 aa). Over residues 171–182 the composition is skewed to basic and acidic residues; the sequence is ERDQAKERDKAR. The tract at residues 171–194 is disordered; it reads ERDQAKERDKARRIAYMRQMGRER.

It belongs to the ToxN/AbiQ toxin family. As to quaternary structure, one ToxN monomer binds to a 34-nt-long single repeat of the ToxI RNA; this complex forms a triangular heterohexameric complex with ToxN connected by the ToxI RNA to another toxin molecule. The ToxI repeats are cleavage products of their precursor. The ToxI repeat forms a pseudoknot which occludes the toxin active site.

Its function is as follows. Toxic component of a type III toxin-antitoxin (TA) system. An endoribonuclease which cleaves between the first and second A of AAAAA sequences; it tolerates other nucleotides in positions +2 and +4 of the consensus. Digests cognate antitoxin RNA ToxI as shown by the 2'-3'-cyclic phosphate at the 3' end of the 34-nt repeats and probably other RNAs. Inhibits growth when expressed in E.coli without causing cell lysis; this bacteriostatic effect is neutralized by cognate RNA antitoxin ToxI, which has 2.9 nearly identical 34 nucleotide-long repeats. Non-cognate antitoxin RNA from P.atrosepticum does not inhibit this toxin. The toxin-antitoxin pair function in plasmid maintenance (a plasmid addiction system), but unlike its P.atrosepticum homolog it is not seen to confer resistance to bacteriophages. The polypeptide is Endoribonuclease ToxN (Bacillus thuringiensis subsp. kurstaki).